We begin with the raw amino-acid sequence, 75 residues long: Conotoxin Vc6.15 (75 aa).

An N-terminal signal peptide occupies residues 1-19 (MEKLTILLHVAAVLMSTQA). A propeptide spanning residues 20–41 (LIQEQRQKAKINLFSKRKPSAE) is cleaved from the precursor. 3 cysteine pairs are disulfide-bonded: cysteine 49/cysteine 62, cysteine 55/cysteine 66, and cysteine 61/cysteine 71.

It belongs to the conotoxin O2 superfamily. In terms of tissue distribution, expressed by the venom duct.

It is found in the secreted. Inhibits voltage-gated ion channels. This chain is Conotoxin Vc6.15, found in Conus victoriae (Queen Victoria cone).